The sequence spans 248 residues: Ribosomal RNA small subunit methyltransferase J (248 aa).

S-adenosyl-L-methionine-binding positions include 98–99 (RD), 114–115 (ER), 150–151 (SS), and Asp-168.

The protein belongs to the methyltransferase superfamily. RsmJ family.

It is found in the cytoplasm. It catalyses the reaction guanosine(1516) in 16S rRNA + S-adenosyl-L-methionine = N(2)-methylguanosine(1516) in 16S rRNA + S-adenosyl-L-homocysteine + H(+). Functionally, specifically methylates the guanosine in position 1516 of 16S rRNA. The polypeptide is Ribosomal RNA small subunit methyltransferase J (Shewanella denitrificans (strain OS217 / ATCC BAA-1090 / DSM 15013)).